We begin with the raw amino-acid sequence, 232 residues long: Pseudaminic acid cytidylyltransferase (232 aa).

The protein belongs to the CMP-NeuNAc synthase family. Mg(2+) serves as cofactor.

The enzyme catalyses pseudaminate + CTP = CMP-pseudaminate + diphosphate. In terms of biological role, catalyzes the final step in the biosynthesis of pseudaminic acid, a sialic-acid-like sugar that is used to modify flagellin. Mediates the activation of pseudaminic acid with CMP by forming CMP-pseudaminic acid. This chain is Pseudaminic acid cytidylyltransferase (pseF), found in Campylobacter jejuni subsp. jejuni serotype O:23/36 (strain 81-176).